The primary structure comprises 840 residues: Aconitase AMT8 (840 aa).

258 to 260 (DSH) is a substrate binding site. C450, C513, and C516 together coordinate [4Fe-4S] cluster. Residues R536, R541, and 709–710 (SR) contribute to the substrate site.

The protein belongs to the aconitase/IPM isomerase family.

Its pathway is mycotoxin biosynthesis. Aconitase; part of the gene clusters that mediate the biosynthesis of AM-toxins, host-selective toxins (HSTs) causing Alternaria blotch on apple, a worldwide distributed disease. AM-toxins are cyclic depsipeptides containing the 3 residues 2-hydroxy-isovaleric acid (2-HIV), dehydroalanine, L-alanine which are common for all 3 AM-toxins I to III. The fourth precursor is L-alpha-amino-methoxyphenyl-valeric acid (L-Amv) for AM-toxin I, L-alpha-amino-phenyl-valeric acid (L-Apv) for AM-toxin II, and L-alpha-amino-hydroxyphenyl-valeric acid (L-Ahv) for AM-toxin III. AM-toxins have two target sites for affecting susceptible apple cells; they cause invagination of the plasma membrane and electrolyte loss and chloroplast disorganization. The non-ribosomal peptide synthetase AMT1 contains 4 catalytic modules and is responsible for activation of each residue in AM-toxin. The aldo-keto reductase AMT2 catalyzes the conversion of 2-keto-isovaleric acid (2-KIV) to 2-hydroxy-isovaleric acid (2-HIV), one of the precursor residues incorporated by AMT1 during AM-toxin biosynthesis, by reduction of its ketone to an alcohol. The cytochrome P450 monooxygenase AMT3 and the thioesterase AMT4 are also important for AM-toxin production, but their exact function within the AM-toxin biosynthesis are not known yet. Up to 21 proteins (including AMT1 to AMT4) are predicted to be involved in AM-toxin biosynthesis since their expression ishighly up-regulated in AM-toxin-producing cultures. The chain is Aconitase AMT8 from Alternaria alternata (Alternaria rot fungus).